A 570-amino-acid chain; its full sequence is Urease subunit alpha (570 aa).

The region spanning 131–570 (GGFDSHIHFI…LPMAQRYFMY (440 aa)) is the Urease domain. Ni(2+) contacts are provided by His-136, His-138, and Lys-219. Lys-219 carries the N6-carboxylysine modification. His-221 contacts substrate. His-248 and His-274 together coordinate Ni(2+). His-322 (proton donor) is an active-site residue. Position 362 (Asp-362) interacts with Ni(2+).

This sequence belongs to the metallo-dependent hydrolases superfamily. Urease alpha subunit family. In terms of assembly, heterotrimer of UreA (gamma), UreB (beta) and UreC (alpha) subunits. Three heterotrimers associate to form the active enzyme. Ni cation serves as cofactor. In terms of processing, carboxylation allows a single lysine to coordinate two nickel ions.

It localises to the cytoplasm. It carries out the reaction urea + 2 H2O + H(+) = hydrogencarbonate + 2 NH4(+). Its pathway is nitrogen metabolism; urea degradation; CO(2) and NH(3) from urea (urease route): step 1/1. The polypeptide is Urease subunit alpha (Rhodopseudomonas palustris (strain BisB18)).